Reading from the N-terminus, the 82-residue chain is UPF0213 protein SH2523 (82 aa).

The region spanning 2-77 is the GIY-YIG domain; it reads AKHYVYIVKC…KTFSRQQKLK (76 aa).

This sequence belongs to the UPF0213 family.

This is UPF0213 protein SH2523 from Staphylococcus haemolyticus (strain JCSC1435).